Reading from the N-terminus, the 385-residue chain is HAT1-interacting factor 1 (385 aa).

The interval 80 to 199 (GNLFGDALLA…RKSGFHIYFE (120 aa)) is important for interaction with heterotetrameric histone H3 and H4 and for interaction with dimeric histone H2A and H2B. Low complexity-rich tracts occupy residues 85–97 (DALL…SGSE) and 105–116 (DVSNGEEGNENG). The interval 85 to 163 (DALLAGDDGS…EEENVEKEEE (79 aa)) is disordered. A compositionally biased stretch (acidic residues) spans 129–160 (DQEEEDLTGDVDSGDSEDSGEGSEEEEENVEK). Phosphoserine is present on Ser174. TPR repeat units follow at residues 186–220 (VSQL…LGRP), 229–262 (ENSR…YLKA), and 289–322 (ALRW…RPKD). The tract at residues 248–332 (EAEMFSRAIH…SELQQARLAQ (85 aa)) is interaction with dimeric histone H2A and H2B. A disordered region spans residues 340 to 385 (VQENQQHGSKRPLSQPTTSIGFPALEKPLGDFNDLSQLVKKKPRRH). A compositionally biased stretch (polar residues) spans 342–359 (ENQQHGSKRPLSQPTTSI).

Belongs to the NASP family. Homodimer. The homodimer interacts with a histone tetramer containing H3 and H4; the interaction is direct. The homodimer interacts with heterodimeric histone H2A and H2B; the interaction is direct. Component of the nuclear histone acetyltransferase B (HAT-B) complex composed of at least HAT1, HAT2 and HIF1. Does not interact with HAT1 in the absence of HAT2. Interacts with histones H3 and H4 in a HAT1/HAT2 dependent manner. Interaction with heterotetrameric histone H3 and H4 precludes interaction with dimeric histone H2A and H2B, irrespective of the fact that their binding involves non-identical regions of the protein.

The protein localises to the nucleus. Its function is as follows. Histone H3 and H4 specific chaperone component of the nuclear histone acetyltransferase B (HAT-B) complex. Involved in chromatin assembly and telomere silencing. This chain is HAT1-interacting factor 1 (HIF1), found in Saccharomyces cerevisiae (strain ATCC 204508 / S288c) (Baker's yeast).